We begin with the raw amino-acid sequence, 554 residues long: Glucose-6-phosphate isomerase (554 aa).

Ser2 is subject to N-acetylserine. Residue Thr53 is modified to Phosphothreonine. Residues 168-169, 218-223, Gln363, Glu367, His398, and Lys520 contribute to the D-glucose 6-phosphate site; these read GS and SKTFTT. Thr220 is subject to Phosphothreonine. The active-site Proton donor is Glu367. Catalysis depends on residues His398 and Lys520.

Belongs to the GPI family. In terms of assembly, homodimer.

The protein resides in the cytoplasm. It is found in the cytosol. The catalysed reaction is alpha-D-glucose 6-phosphate = beta-D-fructose 6-phosphate. It functions in the pathway carbohydrate degradation; glycolysis; D-glyceraldehyde 3-phosphate and glycerone phosphate from D-glucose: step 2/4. Strongly inhibited by the polyol (sugar alcohol) phosphate D-glucitol 6-phosphate (D-sorbitol 6-phosphate). Also inhibited by the polyol (sugar alcohol) phosphate D-ribitol 5-phosphate. Functionally, in the cytoplasm, catalyzes the conversion of glucose-6-phosphate to fructose-6-phosphate, the second step in glycolysis, and the reverse reaction during gluconeogenesis. In Saccharomyces cerevisiae (strain ATCC 204508 / S288c) (Baker's yeast), this protein is Glucose-6-phosphate isomerase (PGI1).